The following is a 1037-amino-acid chain: Guanine nucleotide-binding protein G(s) subunit alpha isoforms XLas (1037 aa).

4 disordered regions span residues 1-105 (MGVR…MPFE), 185-224 (APGGPGAAGVPGAPPEEPQALRPAKAGSRGGYSPPPEETM), 283-588 (SPSQ…TSGC), and 640-666 (PLAEKRRQMRKEALEKRAQKRAEKKRS). Over residues 33–46 (APGAAAPGAGPSPA) the composition is skewed to low complexity. The span at 343-354 (PDKRERAERPPV) shows a compositional bias: basic and acidic residues. Low complexity-rich tracts occupy residues 361–408 (MEGA…GATP) and 416–521 (APAD…PASG). Over residues 553–565 (GKSESSRGRRVYY) the composition is skewed to basic and acidic residues. Positions 572 to 583 (SDDDSSGDESDD) are enriched in acidic residues. Residues 640–660 (PLAEKRRQMRKEALEKRAQKR) show a composition bias toward basic and acidic residues. The stretch at 641–667 (LAEKRRQMRKEALEKRAQKRAEKKRSK) forms a coiled coil. Positions 682–1037 (CTHRLLLLGA…RMHLRQYELL (356 aa)) constitute a G-alpha domain. Positions 685 to 698 (RLLLLGAGESGKST) are G1 motif. 690-698 (GAGESGKST) provides a ligand contact to GTP. Residue Ser697 coordinates Mg(2+). The segment at 711 to 734 (FNGEGGEEDPQAARSNSDGEKATK) is disordered. Positions 730-756 (EKATKVQDIKNNLKEAIETIVAAMSNL) form a coiled coil. Positions 839 to 847 (DLLRCRVLT) are G2 motif. GTP contacts are provided by residues 840-847 (LLRCRVLT), 866-870 (DVGGQ), and 935-938 (NKQD). Arg844 bears the ADP-ribosylarginine; by cholera toxin mark. Thr847 is a binding site for Mg(2+). A G3 motif region spans residues 862–871 (FHMFDVGGQR). The G4 motif stretch occupies residues 931–938 (ILFLNKQD). Ser995 carries the post-translational modification Phosphoserine. The tract at residues 1007-1012 (TCAVDT) is G5 motif. Ala1009 contributes to the GTP binding site.

It belongs to the G-alpha family. G(s) subfamily. As to quaternary structure, g proteins are composed of 3 units; alpha, beta and gamma. The alpha chain contains the guanine nucleotide binding site. Interacts through its N-terminal region with ALEX which is produced from the same locus in a different open reading frame. This interaction may inhibit its adenylyl cyclase-stimulating activity. Interacts with MAGED2.

It is found in the cell membrane. The protein resides in the apical cell membrane. The enzyme catalyses GTP + H2O = GDP + phosphate + H(+). In terms of biological role, guanine nucleotide-binding proteins (G proteins) function as transducers in numerous signaling pathways controlled by G protein-coupled receptors (GPCRs). The alpha chain contains the guanine nucleotide binding site and alternates between an active, GTP-bound state and an inactive, GDP-bound state. Signaling by an activated GPCR promotes GDP release and GTP binding. The alpha subunit has a low GTPase activity that converts bound GTP to GDP, thereby terminating the signal. Both GDP release and GTP hydrolysis are modulated by numerous regulatory proteins. Signaling involves the activation of adenylyl cyclases, resulting in increased levels of the signaling molecule cAMP. GNAS functions downstream of several GPCRs, including beta-adrenergic receptors. XLas isoforms interact with the same set of receptors as Gnas isoforms. The protein is Guanine nucleotide-binding protein G(s) subunit alpha isoforms XLas (GNAS) of Homo sapiens (Human).